Here is an 868-residue protein sequence, read N- to C-terminus: Translation initiation factor IF-2 (868 aa).

Disordered regions lie at residues 158 to 178 (VKEE…DELT) and 200 to 269 (KKEE…KYRE). The span at 200 to 209 (KKEEVKPEKV) shows a compositional bias: basic and acidic residues. The segment covering 249 to 260 (RGGRSKFKKKKG) has biased composition (basic residues). The region spanning 368–537 (GRAPVVTIMG…LLQSEVLELK (170 aa)) is the tr-type G domain. The tract at residues 377-384 (GHVDHGKT) is G1. 377–384 (GHVDHGKT) serves as a coordination point for GTP. Residues 402-406 (GITQH) form a G2 region. Residues 423-426 (DTPG) are G3. Residues 423–427 (DTPGH) and 477–480 (NKMD) each bind GTP. The G4 stretch occupies residues 477 to 480 (NKMD). A G5 region spans residues 513-515 (SAK).

It belongs to the TRAFAC class translation factor GTPase superfamily. Classic translation factor GTPase family. IF-2 subfamily.

It localises to the cytoplasm. One of the essential components for the initiation of protein synthesis. Protects formylmethionyl-tRNA from spontaneous hydrolysis and promotes its binding to the 30S ribosomal subunits. Also involved in the hydrolysis of GTP during the formation of the 70S ribosomal complex. This chain is Translation initiation factor IF-2, found in Legionella pneumophila (strain Lens).